The primary structure comprises 838 residues: Collagen alpha-2(I) chain (838 aa).

Positions 1–838 (GPMGIMGPRG…GTVGPAGIRS (838 aa)) are disordered. Residues 11-38 (FQGPAGEPGEPGQTGPAGARGPAGPPGK) are compositionally biased toward low complexity. The segment covering 39 to 53 (AGEDGHPGKPGRPGE) has biased composition (basic and acidic residues). Composition is skewed to low complexity over residues 101-122 (SRGS…SAGP), 137-147 (PVGNTGPAGPA), 215-236 (NGES…RGIP), and 329-344 (AGNR…NGAQ). A compositionally biased stretch (gly residues) spans 351–360 (GVQGGKGEQG). Low complexity-rich tracts occupy residues 407 to 424 (PGES…SRGP) and 436 to 446 (EPGVVGAPGTA). The span at 447–456 (GPAGSGGIPG) shows a compositional bias: gly residues. Low complexity-rich tracts occupy residues 479-523 (VGTT…PRGT), 530-550 (VGPA…QPGA), and 568-581 (SAGP…PGPA). The span at 582–591 (GSRGDGGPPG) shows a compositional bias: gly residues. The segment covering 593 to 602 (TGFPGAAGRT) has biased composition (low complexity). The segment covering 633–642 (GETGAGGPPG) has biased composition (gly residues). Residues 649 to 689 (TAGPQGIIGAPGIIGIPGSRGIPGVSGSVGEPGPIGISGPP) show a composition bias toward low complexity. The segment covering 693 to 702 (GPSGGVGNPG) has biased composition (gly residues). 3 stretches are compositionally biased toward low complexity: residues 703–718 (VNGA…NPGN), 736–758 (YAGN…VGPA), and 766–781 (EPGP…AIGP).

It belongs to the fibrillar collagen family. As to quaternary structure, trimers of one alpha 2(I) and two alpha 1(I) chains. Interacts (via C-terminus) with TMEM131 (via PapD-L domain); the interaction is direct and is involved in assembly and TRAPPIII ER-to-Golgi transport complex-dependent secretion of collagen. Prolines at the third position of the tripeptide repeating unit (G-X-Y) are hydroxylated in some or all of the chains. In terms of tissue distribution, forms the fibrils of tendon, ligaments and bones. In bones, the fibrils are mineralized with calcium hydroxyapatite.

It is found in the secreted. It localises to the extracellular space. The protein localises to the extracellular matrix. In terms of biological role, type I collagen is a member of group I collagen (fibrillar forming collagen). The sequence is that of Collagen alpha-2(I) chain from Cyclopes didactylus (Silky anteater).